Reading from the N-terminus, the 243-residue chain is Phosphoribosyl isomerase A (243 aa).

The active-site Proton acceptor is the D9. The Proton donor role is filled by D128.

This sequence belongs to the HisA/HisF family.

The protein resides in the cytoplasm. The catalysed reaction is 1-(5-phospho-beta-D-ribosyl)-5-[(5-phospho-beta-D-ribosylamino)methylideneamino]imidazole-4-carboxamide = 5-[(5-phospho-1-deoxy-D-ribulos-1-ylimino)methylamino]-1-(5-phospho-beta-D-ribosyl)imidazole-4-carboxamide. It carries out the reaction N-(5-phospho-beta-D-ribosyl)anthranilate = 1-(2-carboxyphenylamino)-1-deoxy-D-ribulose 5-phosphate. It participates in amino-acid biosynthesis; L-histidine biosynthesis; L-histidine from 5-phospho-alpha-D-ribose 1-diphosphate: step 4/9. The protein operates within amino-acid biosynthesis; L-tryptophan biosynthesis; L-tryptophan from chorismate: step 3/5. In terms of biological role, involved in both the histidine and tryptophan biosynthetic pathways. The sequence is that of Phosphoribosyl isomerase A from Mycolicibacterium paratuberculosis (strain ATCC BAA-968 / K-10) (Mycobacterium paratuberculosis).